A 217-amino-acid polypeptide reads, in one-letter code: Glutathione S-transferase U20 (217 aa).

Residues 3 to 82 form the GST N-terminal domain; it reads NLPILLDYWP…YVDEAWPEKN (80 aa). The glutathione site is built by serine 13, isoleucine 54, and serine 67. One can recognise a GST C-terminal domain in the interval 88-208; the sequence is DPYGRAQARF…LPDSEKIVAY (121 aa).

Belongs to the GST superfamily. Tau family. As to quaternary structure, homodimerization. Interacts with JAR1/FIN219 under continuous far red (cFR) light to stimulate JAR1/FIN219 activity and substrate selectivity. As to expression, mostly associated with vascular tissues, especially near hydathodes.

It is found in the nucleus. The protein resides in the cytoplasm. It localises to the cytosol. It carries out the reaction RX + glutathione = an S-substituted glutathione + a halide anion + H(+). With respect to regulation, activated by JAR1/FIN219. In terms of biological role, exhibits glutathione-dependent thiol transferase activities. Can use glutathione (GSH) and 1-chloro-2,4-dinitrobenzene (CDNB) as substrates. Involved in the regulation of far-red light influence on development. Regulator of the interplay between light and JA signaling by increasing JAR1/FIN219 efficiency. Maybe involved in gravitropic signal transduction. The sequence is that of Glutathione S-transferase U20 from Arabidopsis thaliana (Mouse-ear cress).